We begin with the raw amino-acid sequence, 310 residues long: Homoserine kinase (310 aa).

Residue 91-101 (PIGSGLGSSAC) participates in ATP binding.

Belongs to the GHMP kinase family. Homoserine kinase subfamily.

Its subcellular location is the cytoplasm. It carries out the reaction L-homoserine + ATP = O-phospho-L-homoserine + ADP + H(+). Its pathway is amino-acid biosynthesis; L-threonine biosynthesis; L-threonine from L-aspartate: step 4/5. Catalyzes the ATP-dependent phosphorylation of L-homoserine to L-homoserine phosphate. This Shigella flexneri serotype 5b (strain 8401) protein is Homoserine kinase.